Reading from the N-terminus, the 1134-residue chain is Error-prone DNA polymerase (1134 aa).

Residues 1–33 (MSYHNPPIPWRELEGRISGRPAPHGHQESHADQ) form a disordered region.

This sequence belongs to the DNA polymerase type-C family. DnaE2 subfamily.

The protein resides in the cytoplasm. It carries out the reaction DNA(n) + a 2'-deoxyribonucleoside 5'-triphosphate = DNA(n+1) + diphosphate. DNA polymerase involved in damage-induced mutagenesis and translesion synthesis (TLS). It is not the major replicative DNA polymerase. This is Error-prone DNA polymerase from Cutibacterium acnes (strain DSM 16379 / KPA171202) (Propionibacterium acnes).